Consider the following 251-residue polypeptide: tRNA (guanine-N(7)-)-methyltransferase (251 aa).

S-adenosyl-L-methionine is bound by residues E80, E105, D132, and D155. Residue D155 is part of the active site. Substrate-binding positions include K159, D191, and 228 to 231 (TKFE).

This sequence belongs to the class I-like SAM-binding methyltransferase superfamily. TrmB family.

The enzyme catalyses guanosine(46) in tRNA + S-adenosyl-L-methionine = N(7)-methylguanosine(46) in tRNA + S-adenosyl-L-homocysteine. The protein operates within tRNA modification; N(7)-methylguanine-tRNA biosynthesis. In terms of biological role, catalyzes the formation of N(7)-methylguanine at position 46 (m7G46) in tRNA. This chain is tRNA (guanine-N(7)-)-methyltransferase, found in Histophilus somni (strain 129Pt) (Haemophilus somnus).